A 401-amino-acid polypeptide reads, in one-letter code: Probable tRNA sulfurtransferase (401 aa).

Residues 60 to 165 (EEICSLLKNI…EEATFLTIRN (106 aa)) form the THUMP domain. Residues 183 to 184 (ML), 208 to 209 (HF), R265, G287, and Q296 each bind ATP.

It belongs to the ThiI family.

The protein localises to the cytoplasm. It carries out the reaction [ThiI sulfur-carrier protein]-S-sulfanyl-L-cysteine + a uridine in tRNA + 2 reduced [2Fe-2S]-[ferredoxin] + ATP + H(+) = [ThiI sulfur-carrier protein]-L-cysteine + a 4-thiouridine in tRNA + 2 oxidized [2Fe-2S]-[ferredoxin] + AMP + diphosphate. It catalyses the reaction [ThiS sulfur-carrier protein]-C-terminal Gly-Gly-AMP + S-sulfanyl-L-cysteinyl-[cysteine desulfurase] + AH2 = [ThiS sulfur-carrier protein]-C-terminal-Gly-aminoethanethioate + L-cysteinyl-[cysteine desulfurase] + A + AMP + 2 H(+). The protein operates within cofactor biosynthesis; thiamine diphosphate biosynthesis. Catalyzes the ATP-dependent transfer of a sulfur to tRNA to produce 4-thiouridine in position 8 of tRNAs, which functions as a near-UV photosensor. Also catalyzes the transfer of sulfur to the sulfur carrier protein ThiS, forming ThiS-thiocarboxylate. This is a step in the synthesis of thiazole, in the thiamine biosynthesis pathway. The sulfur is donated as persulfide by IscS. In Bacillus velezensis (strain DSM 23117 / BGSC 10A6 / LMG 26770 / FZB42) (Bacillus amyloliquefaciens subsp. plantarum), this protein is Probable tRNA sulfurtransferase.